Here is a 62-residue protein sequence, read N- to C-terminus: Photosystem II reaction center protein Z (62 aa).

The next 2 helical transmembrane spans lie at alanine 8–alanine 28 and phenylalanine 41–valine 61.

It belongs to the PsbZ family. PSII is composed of 1 copy each of membrane proteins PsbA, PsbB, PsbC, PsbD, PsbE, PsbF, PsbH, PsbI, PsbJ, PsbK, PsbL, PsbM, PsbT, PsbX, PsbY, PsbZ, Psb30/Ycf12, peripheral proteins PsbO, CyanoQ (PsbQ), PsbU, PsbV and a large number of cofactors. It forms dimeric complexes.

Its subcellular location is the cellular thylakoid membrane. Functionally, may control the interaction of photosystem II (PSII) cores with the light-harvesting antenna, regulates electron flow through the 2 photosystem reaction centers. PSII is a light-driven water plastoquinone oxidoreductase, using light energy to abstract electrons from H(2)O, generating a proton gradient subsequently used for ATP formation. The polypeptide is Photosystem II reaction center protein Z (Picosynechococcus sp. (strain ATCC 27264 / PCC 7002 / PR-6) (Agmenellum quadruplicatum)).